The chain runs to 567 residues: Urease subunit alpha (567 aa).

The 439-residue stretch at 129 to 567 (GGIDTHIHFI…LPMAQRYFLF (439 aa)) folds into the Urease domain. Positions 134, 136, and 217 each coordinate Ni(2+). At Lys-217 the chain carries N6-carboxylysine. A substrate-binding site is contributed by His-219. Positions 246 and 272 each coordinate Ni(2+). The Proton donor role is filled by His-320. Asp-360 contacts Ni(2+).

This sequence belongs to the metallo-dependent hydrolases superfamily. Urease alpha subunit family. As to quaternary structure, probable heterotrimer of UreA (gamma), UreB (beta) and UreC (alpha) subunits. Three heterotrimers associate to form the active enzyme. The trimeric urease interacts with an accessory complex composed of UreD, UreF and UreG, which is required for the assembly of the nickel containing metallocenter of UreC. The UreE protein may also play a direct role in nickel transfer to the urease apoprotein. Ni cation is required as a cofactor. Carboxylation allows a single lysine to coordinate two nickel ions.

It localises to the cytoplasm. It catalyses the reaction urea + 2 H2O + H(+) = hydrogencarbonate + 2 NH4(+). The protein operates within nitrogen metabolism; urea degradation; CO(2) and NH(3) from urea (urease route): step 1/1. In Proteus mirabilis (strain HI4320), this protein is Urease subunit alpha.